The following is a 292-amino-acid chain: 2-(5''-triphosphoribosyl)-3'-dephosphocoenzyme-A synthase (292 aa).

This sequence belongs to the CitG/MdcB family.

It carries out the reaction 3'-dephospho-CoA + ATP = 2'-(5''-triphospho-alpha-D-ribosyl)-3'-dephospho-CoA + adenine. Its function is as follows. Catalyzes the formation of 2-(5''-triphosphoribosyl)-3'-dephosphocoenzyme-A, the precursor of the prosthetic group of the holo-acyl carrier protein (gamma chain) of citrate lyase, from ATP and dephospho-CoA. The sequence is that of 2-(5''-triphosphoribosyl)-3'-dephosphocoenzyme-A synthase from Escherichia coli (strain UTI89 / UPEC).